The chain runs to 359 residues: Epoxide hydrolase 4 (359 aa).

Residues 15–35 traverse the membrane as a helical; Signal-anchor for type II membrane protein segment; the sequence is ALLYWSLVYGYCGLCASVHLL. The 246-residue stretch at 92–337 folds into the AB hydrolase-1 domain; the sequence is PLMLLLHGFP…ILSEGSHWLQ (246 aa). Asp-167 serves as the catalytic Nucleophile. Catalysis depends on Tyr-279, which acts as the Proton donor. His-334 acts as the Proton acceptor in catalysis.

The protein belongs to the AB hydrolase superfamily. Epoxide hydrolase family.

It localises to the membrane. The chain is Epoxide hydrolase 4 (Ephx4) from Mus musculus (Mouse).